The primary structure comprises 320 residues: Cytochrome f (320 aa).

The signal sequence occupies residues 1–35; that stretch reads MQTRNAFSWLKKQITRSISVSLMIYILTRTSISSA. Tyr36, Cys56, Cys59, and His60 together coordinate heme. A helical transmembrane segment spans residues 286–306; that stretch reads VQGLLFFLASVILAQIFLVLK.

The protein belongs to the cytochrome f family. In terms of assembly, the 4 large subunits of the cytochrome b6-f complex are cytochrome b6, subunit IV (17 kDa polypeptide, petD), cytochrome f and the Rieske protein, while the 4 small subunits are PetG, PetL, PetM and PetN. The complex functions as a dimer. Requires heme as cofactor.

It localises to the plastid. The protein resides in the chloroplast thylakoid membrane. In terms of biological role, component of the cytochrome b6-f complex, which mediates electron transfer between photosystem II (PSII) and photosystem I (PSI), cyclic electron flow around PSI, and state transitions. This is Cytochrome f from Nicotiana sylvestris (Wood tobacco).